Consider the following 444-residue polypeptide: Homogentisate 1,2-dioxygenase (444 aa).

The Proton acceptor role is filled by His-298. The Fe cation site is built by His-341 and Glu-347. Positions 356 and 377 each coordinate homogentisate. Residue His-377 coordinates Fe cation.

Belongs to the homogentisate dioxygenase family. As to quaternary structure, hexamer; dimer of trimers. Requires Fe cation as cofactor.

It catalyses the reaction homogentisate + O2 = 4-maleylacetoacetate + H(+). Its pathway is amino-acid degradation; L-phenylalanine degradation; acetoacetate and fumarate from L-phenylalanine: step 4/6. Its function is as follows. Involved in the catabolism of homogentisate (2,5-dihydroxyphenylacetate or 2,5-OH-PhAc), a central intermediate in the degradation of phenylalanine and tyrosine. Catalyzes the oxidative ring cleavage of the aromatic ring of homogentisate to yield maleylacetoacetate. This chain is Homogentisate 1,2-dioxygenase, found in Burkholderia orbicola (strain MC0-3).